Reading from the N-terminus, the 664-residue chain is Protein fem-1 homolog CG6966 (664 aa).

ANK repeat units follow at residues 40–70, 82–111, 115–144, 148–177, 181–210, and 213–242; these read NGATPLVISCRNGHYDIVEYLLTKCRANVEQ, EDAPPLWCAAAAGHLGIVKMLVRRGANVNS, TNSTPLRAACFDGHYEIVKYLVHHGADFEV, HGHTCLMIACYKGHFRIAQYLLSLNADVNR, KGNTALHDCAESGSLQILQLLLKHGATMDV, and YGMTPLLAASVTGHMPIVEHLITLPCVSRE. TPR repeat units lie at residues 245–279 and 335–368; these read IHALELLGATYVDRKRDMAAALNLWRRALEERAVE and SYYIRFRGAHYADAGRFDRCIELWSYALTMQQKI. Positions 433-460 are disordered; that stretch reads QQKDQQHPQKQLPAADKSPSCSASSSAS. The segment covering 450 to 460 has biased composition (low complexity); that stretch reads SPSCSASSSAS. ANK repeat units lie at residues 529–571 and 575–605; these read FDRT…DPNA and AGNTPLHLATMQPYVEPLSHILLEGGAHLDT.

This sequence belongs to the fem-1 family. As to quaternary structure, component of a CRL2 E3 ubiquitin-protein ligase complex, also named ECS (Elongin BC-CUL2/5-SOCS-box protein) complex.

The protein operates within protein modification; protein ubiquitination. Functionally, substrate-recognition component of a Cul2-RING (CRL2) E3 ubiquitin-protein ligase complex of the DesCEND (destruction via C-end degrons) pathway, which recognizes a C-degron located at the extreme C terminus of target proteins, leading to their ubiquitination and degradation. The C-degron recognized by the DesCEND pathway is usually a motif of less than ten residues and can be present in full-length proteins, truncated proteins or proteolytically cleaved forms. The sequence is that of Protein fem-1 homolog CG6966 from Drosophila melanogaster (Fruit fly).